Reading from the N-terminus, the 447-residue chain is GTPase Der (447 aa).

2 consecutive EngA-type G domains span residues proline 3–glutamate 167 and isoleucine 180–asparagine 353. GTP contacts are provided by residues glycine 9–serine 16, aspartate 56–phenylalanine 60, asparagine 119–glutamate 122, glycine 186–serine 193, aspartate 233–leucine 237, and asparagine 298–aspartate 301. The KH-like domain maps to arginine 354 to serine 438.

It belongs to the TRAFAC class TrmE-Era-EngA-EngB-Septin-like GTPase superfamily. EngA (Der) GTPase family. In terms of assembly, associates with the 50S ribosomal subunit.

Its function is as follows. GTPase that plays an essential role in the late steps of ribosome biogenesis. In Acidovorax ebreus (strain TPSY) (Diaphorobacter sp. (strain TPSY)), this protein is GTPase Der.